The chain runs to 375 residues: MVKNNKRKRVVIAMSGGVDSSVAAALLKEEGHEVIGISMQVWDYTRFTAEEGEKFDTCCSLDDIHDARRVAEQLEIPFYVVNFEEEFQNLVIDDFVNEYLLGRTPNPCVRCNQWIKFELLLKKARGLGADMIATGHYARTEQDADGRYRLMKGVDPAKDQSYFLFTLTQEQLAMTLFPLGGMTKQEVRALAAGYGLRVAEKGESQEICFVPDNDYVRFIEEERGKQLLSGNIVDRKGKVLGVHDGTYRYTVGQRKGLGIAHPEPLYVLGVDAARKEVTVGPRDALYSDGLIATAINWIAPTPETAIEASCKIRYRHHPIPCRILPLADNRAEVRFTEREKSVTPGQAVVFYDGDTVLGGGWIEHAVNTKTAVSHE.

ATP is bound by residues 13 to 20 (AMSGGVDS) and methionine 39. The Nucleophile role is filled by cysteine 111. Residues cysteine 111 and cysteine 208 are joined by a disulfide bond. Glycine 135 is a binding site for ATP. The segment at 158–160 (KDQ) is interaction with tRNA. The Cysteine persulfide intermediate role is filled by cysteine 208. The tract at residues 313-314 (RY) is interaction with tRNA.

It belongs to the MnmA/TRMU family.

Its subcellular location is the cytoplasm. It catalyses the reaction S-sulfanyl-L-cysteinyl-[protein] + uridine(34) in tRNA + AH2 + ATP = 2-thiouridine(34) in tRNA + L-cysteinyl-[protein] + A + AMP + diphosphate + H(+). Catalyzes the 2-thiolation of uridine at the wobble position (U34) of tRNA, leading to the formation of s(2)U34. In Geotalea uraniireducens (strain Rf4) (Geobacter uraniireducens), this protein is tRNA-specific 2-thiouridylase MnmA.